A 402-amino-acid chain; its full sequence is CCA-adding enzyme (402 aa).

2 residues coordinate ATP: G32 and R35. CTP is bound by residues G32 and R35. Residues D45 and D47 each contribute to the Mg(2+) site. Residues R116, D159, R162, R165, and R168 each contribute to the ATP site. 5 residues coordinate CTP: R116, D159, R162, R165, and R168.

The protein belongs to the tRNA nucleotidyltransferase/poly(A) polymerase family. Bacterial CCA-adding enzyme type 3 subfamily. As to quaternary structure, homodimer. Mg(2+) is required as a cofactor.

It catalyses the reaction a tRNA precursor + 2 CTP + ATP = a tRNA with a 3' CCA end + 3 diphosphate. The enzyme catalyses a tRNA with a 3' CCA end + 2 CTP + ATP = a tRNA with a 3' CCACCA end + 3 diphosphate. Its function is as follows. Catalyzes the addition and repair of the essential 3'-terminal CCA sequence in tRNAs without using a nucleic acid template. Adds these three nucleotides in the order of C, C, and A to the tRNA nucleotide-73, using CTP and ATP as substrates and producing inorganic pyrophosphate. tRNA 3'-terminal CCA addition is required both for tRNA processing and repair. Also involved in tRNA surveillance by mediating tandem CCA addition to generate a CCACCA at the 3' terminus of unstable tRNAs. While stable tRNAs receive only 3'-terminal CCA, unstable tRNAs are marked with CCACCA and rapidly degraded. The chain is CCA-adding enzyme from Streptococcus pyogenes serotype M2 (strain MGAS10270).